Consider the following 644-residue polypeptide: Acetyl-coenzyme A synthetase (644 aa).

CoA is bound by residues 190 to 193 and Thr308; that span reads RGSK. Residues 384–386, 408–413, Asp497, and Arg512 each bind ATP; these read GEP and DTWWQT. A CoA-binding site is contributed by Ser520. ATP is bound at residue Arg523. 3 residues coordinate Mg(2+): Val534, His536, and Val539. Residue Arg581 coordinates CoA. Residue Lys606 is modified to N6-acetyllysine.

The protein belongs to the ATP-dependent AMP-binding enzyme family. Mg(2+) is required as a cofactor. Post-translationally, acetylated. Deacetylation by the SIR2-homolog deacetylase activates the enzyme.

The catalysed reaction is acetate + ATP + CoA = acetyl-CoA + AMP + diphosphate. Catalyzes the conversion of acetate into acetyl-CoA (AcCoA), an essential intermediate at the junction of anabolic and catabolic pathways. AcsA undergoes a two-step reaction. In the first half reaction, AcsA combines acetate with ATP to form acetyl-adenylate (AcAMP) intermediate. In the second half reaction, it can then transfer the acetyl group from AcAMP to the sulfhydryl group of CoA, forming the product AcCoA. The polypeptide is Acetyl-coenzyme A synthetase (Magnetococcus marinus (strain ATCC BAA-1437 / JCM 17883 / MC-1)).